A 227-amino-acid polypeptide reads, in one-letter code: Ribose-5-phosphate isomerase A (227 aa).

Residues 26–29, 82–85, and 95–98 contribute to the substrate site; these read TGST, DGAD, and KGGG. E104 (proton acceptor) is an active-site residue. Substrate is bound at residue K122.

Belongs to the ribose 5-phosphate isomerase family. In terms of assembly, homodimer.

The catalysed reaction is aldehydo-D-ribose 5-phosphate = D-ribulose 5-phosphate. Its pathway is carbohydrate degradation; pentose phosphate pathway; D-ribose 5-phosphate from D-ribulose 5-phosphate (non-oxidative stage): step 1/1. Its function is as follows. Catalyzes the reversible conversion of ribose-5-phosphate to ribulose 5-phosphate. In Streptococcus equi subsp. zooepidemicus (strain H70), this protein is Ribose-5-phosphate isomerase A.